A 348-amino-acid polypeptide reads, in one-letter code: Phosphate acyltransferase (348 aa).

Belongs to the PlsX family. As to quaternary structure, homodimer. Probably interacts with PlsY.

The protein resides in the cytoplasm. The catalysed reaction is a fatty acyl-[ACP] + phosphate = an acyl phosphate + holo-[ACP]. The protein operates within lipid metabolism; phospholipid metabolism. Its function is as follows. Catalyzes the reversible formation of acyl-phosphate (acyl-PO(4)) from acyl-[acyl-carrier-protein] (acyl-ACP). This enzyme utilizes acyl-ACP as fatty acyl donor, but not acyl-CoA. In Pectobacterium atrosepticum (strain SCRI 1043 / ATCC BAA-672) (Erwinia carotovora subsp. atroseptica), this protein is Phosphate acyltransferase.